Reading from the N-terminus, the 608-residue chain is Lysophospholipase 2 (608 aa).

Positions 1–17 are cleaved as a signal peptide; the sequence is MLVWQSILLFLVGCVLS. Residues 30-564 form the PLA2c domain; that stretch reads QCPEGKLTRS…ENYCWDGTIY (535 aa). Asparagine 259, asparagine 365, asparagine 450, asparagine 464, asparagine 491, and asparagine 572 each carry an N-linked (GlcNAc...) asparagine glycan.

Belongs to the lysophospholipase family.

It localises to the secreted. The catalysed reaction is a 1-acyl-sn-glycero-3-phosphocholine + H2O = sn-glycerol 3-phosphocholine + a fatty acid + H(+). In terms of biological role, catalyzes the release of fatty acids from lysophospholipids. Phospholipase B may well contribute to pathogenicity by abetting the fungus in damaging and traversing host cell membranes, processes which likely increase the rapidity of disseminated infection. This Candida albicans (Yeast) protein is Lysophospholipase 2 (PLB2).